Consider the following 419-residue polypeptide: Elongation factor Tu, chloroplastic (419 aa).

One can recognise a tr-type G domain in the interval 10–214 (KPHVNIGTIG…AVDSYIPTPK (205 aa)). The segment at 19–26 (GHVDHGKT) is G1. 19 to 26 (GHVDHGKT) provides a ligand contact to GTP. Mg(2+) is bound at residue Thr-26. Residues 60–64 (GITIN) form a G2 region. The segment at 81–84 (DCPG) is G3. GTP is bound by residues 81–85 (DCPGH) and 136–139 (NKED). The segment at 136 to 139 (NKED) is G4. Residues 174–176 (SAL) form a G5 region.

The protein belongs to the TRAFAC class translation factor GTPase superfamily. Classic translation factor GTPase family. EF-Tu/EF-1A subfamily.

It localises to the plastid. It is found in the chloroplast. It carries out the reaction GTP + H2O = GDP + phosphate + H(+). In terms of biological role, GTP hydrolase that promotes the GTP-dependent binding of aminoacyl-tRNA to the A-site of ribosomes during protein biosynthesis. This chain is Elongation factor Tu, chloroplastic (tufA), found in Chara vulgaris (Common stonewort).